Consider the following 413-residue polypeptide: Clamp protein VP6 (413 aa).

It belongs to the reoviridae clamp protein family. Interacts with capsid proteins VP3, VP4 and VP7.

The protein localises to the virion. Functionally, located at the interface of the incomplete T=13 outer capsid and the pseudo T=2 inner capsid, 120 VP6 subunits clamp and stabilize the inner capsid shell. The sequence is that of Clamp protein VP6 (S8) from Ctenopharyngodon idella (Grass carp).